We begin with the raw amino-acid sequence, 155 residues long: Putative pre-16S rRNA nuclease (155 aa).

The protein belongs to the YqgF nuclease family.

The protein localises to the cytoplasm. Its function is as follows. Could be a nuclease involved in processing of the 5'-end of pre-16S rRNA. In Xanthomonas campestris pv. campestris (strain 8004), this protein is Putative pre-16S rRNA nuclease.